The chain runs to 439 residues: Apolipoprotein N-acyltransferase (439 aa).

Transmembrane regions (helical) follow at residues 13–33, 47–67, 75–95, 97–117, 149–169, and 175–195; these read LLAG…FLVF, LFSF…IPLI, FIAY…QFGL, YLLW…YTLV, NAGT…FPLF, and IFSL…ETSY. Residues 207-439 form the CN hydrolase domain; the sequence is IQPFVPQDVK…GSRGILLFSF (233 aa). Glu-248 acts as the Proton acceptor in catalysis. Residue Lys-305 is part of the active site. The active-site Nucleophile is Cys-355.

It belongs to the CN hydrolase family. Apolipoprotein N-acyltransferase subfamily.

The protein resides in the cell inner membrane. The enzyme catalyses N-terminal S-1,2-diacyl-sn-glyceryl-L-cysteinyl-[lipoprotein] + a glycerophospholipid = N-acyl-S-1,2-diacyl-sn-glyceryl-L-cysteinyl-[lipoprotein] + a 2-acyl-sn-glycero-3-phospholipid + H(+). Its pathway is protein modification; lipoprotein biosynthesis (N-acyl transfer). Its function is as follows. Catalyzes the phospholipid dependent N-acylation of the N-terminal cysteine of apolipoprotein, the last step in lipoprotein maturation. The sequence is that of Apolipoprotein N-acyltransferase from Aquifex aeolicus (strain VF5).